A 38-amino-acid chain; its full sequence is SYIITTPRMWVAGSPAQVRTYVMPYGCGEQNMVNFAPN.

A cross-link (isoglutamyl cysteine thioester (Cys-Gln)) is located at residues 27-30 (CGEQ).

The protein belongs to the protease inhibitor I39 (alpha-2-macroglobulin) family. Homodimer; disulfide-linked. Hemolymph.

The protein resides in the secreted. In terms of biological role, is able to inhibit all four classes of proteinases by a unique 'trapping' mechanism. This protein has a peptide stretch, called the 'bait region' which contains specific cleavage sites for different proteinases. When a proteinase cleaves the bait region, a conformational change is induced in the protein which traps the proteinase. The entrapped enzyme remains active against low molecular weight substrates (activity against high molecular weight substrates is greatly reduced). Following cleavage in the bait region a thioester bond is hydrolyzed and mediates the covalent binding of the protein to the proteinase. This chain is Alpha-2-macroglobulin homolog, found in Homarus americanus (American lobster).